We begin with the raw amino-acid sequence, 34 residues long: Photosystem II reaction center protein T (34 aa).

Residues 3–23 (ALVYTFLLVSTLGIIFFAIFF) form a helical membrane-spanning segment.

It belongs to the PsbT family. As to quaternary structure, PSII is composed of 1 copy each of membrane proteins PsbA, PsbB, PsbC, PsbD, PsbE, PsbF, PsbH, PsbI, PsbJ, PsbK, PsbL, PsbM, PsbT, PsbY, PsbZ, Psb30/Ycf12, at least 3 peripheral proteins of the oxygen-evolving complex and a large number of cofactors. It forms dimeric complexes.

The protein localises to the plastid. The protein resides in the chloroplast thylakoid membrane. Its function is as follows. Found at the monomer-monomer interface of the photosystem II (PS II) dimer, plays a role in assembly and dimerization of PSII. PSII is a light-driven water plastoquinone oxidoreductase, using light energy to abstract electrons from H(2)O, generating a proton gradient subsequently used for ATP formation. The sequence is that of Photosystem II reaction center protein T from Solanum bulbocastanum (Wild potato).